The chain runs to 1089 residues: GPI ethanolamine phosphate transferase 3, catalytic subunit (1089 aa).

Residues 4–24 (ASVLLFLAWVCFLFYAGIALF) form a helical membrane-spanning segment. Residue N268 is glycosylated (N-linked (GlcNAc...) asparagine). Helical transmembrane passes span 457–477 (LLAA…SPGF), 482–502 (LLLT…GLLG), 510–530 (LVLL…WKAW), 541–561 (TLFP…AVFF), 575–595 (FLLG…GQLL), 668–688 (LWYG…RLWL), 701–721 (MLFV…YWAL), 747–767 (VAGL…TVLV), 830–850 (SVYS…LLLL), 857–877 (LVFL…AAGI), 944–964 (FASH…PFLC), 1014–1034 (LKYL…ASIL), and 1048–1068 (FIFE…GIAL).

It belongs to the PIGG/PIGN/PIGO family. PIGO subfamily. As to quaternary structure, part of the ethanolamine phosphate transferase 3 complex composed by PIGO and PIGF. PIGF is required to stabilize PIGO.

It localises to the endoplasmic reticulum membrane. The protein operates within glycolipid biosynthesis; glycosylphosphatidylinositol-anchor biosynthesis. Functionally, catalytic subunit of the ethanolamine phosphate transferase 3 complex that transfers an ethanolamine phosphate (EtNP) from a phosphatidylethanolamine (PE) to the 6-OH position of the third alpha-1,2-linked mannose of an alpha-D-Man-(1-&gt;2)-alpha-D-Man-(1-&gt;6)-2-PEtn-alpha-D-Man-(1-&gt;4)-alpha-D-GlcN-(1-&gt;6)-(1-radyl,2-acyl-sn-glycero-3-phospho)-2-acyl-inositol (also termed H6) intermediate to generate a 6-PEtn-alpha-D-Man-(1-&gt;2)-alpha-D-Man-(1-&gt;6)-2-PEtn-alpha-D-Man-(1-&gt;4)-alpha-D-GlcN-(1-&gt;6)-(1-radyl,2-acyl-sn-glycero-3-phospho)-2-acyl-inositol (also termed H7) and participates in the tenth step of the glycosylphosphatidylinositol-anchor biosynthesis. The chain is GPI ethanolamine phosphate transferase 3, catalytic subunit from Homo sapiens (Human).